The sequence spans 373 residues: Probable G-protein coupled receptor 173 (373 aa).

Residues 1-26 lie on the Extracellular side of the membrane; the sequence is MANTTGEPEEVSGALSLPSASAYVKL. Asparagine 3 carries N-linked (GlcNAc...) asparagine glycosylation. Residues 27-47 traverse the membrane as a helical segment; it reads VLLGLIMCVSLAGNAILSLLV. Residues 48 to 59 lie on the Cytoplasmic side of the membrane; that stretch reads LKERALHKAPYY. The helical transmembrane segment at 60–80 threads the bilayer; it reads FLLDLCLADGIRSAICFPFVL. The Extracellular segment spans residues 81 to 97; that stretch reads ASVRHGSSWTFSALSCK. The cysteines at positions 96 and 174 are disulfide-linked. The chain crosses the membrane as a helical span at residues 98-118; sequence IVAFMAVLFCFHAAFMLFCIS. The Cytoplasmic portion of the chain corresponds to 119–139; it reads VTRYMAIAHHRFYAKRMTLWT. The helical transmembrane segment at 140-160 threads the bilayer; that stretch reads CAAVICMAWTLSVAMAFPPVF. The Extracellular segment spans residues 161–188; the sequence is DVGTYKFIREEDQCIFEHRYFKANDTLG. The N-linked (GlcNAc...) asparagine glycan is linked to asparagine 184. Residues 189 to 209 traverse the membrane as a helical segment; that stretch reads FMLMLAVLMAATHAVYGKLLL. The Cytoplasmic segment spans residues 210–287; it reads FEYRHRKMKP…VKGEKQLGRM (78 aa). Residues 288–308 traverse the membrane as a helical segment; that stretch reads FYAITLLFLLLWSPYIVACYW. Topologically, residues 309-322 are extracellular; it reads RVFVKACAVPHRYL. Residues 323–343 traverse the membrane as a helical segment; that stretch reads ATAVWMSFAQAAVNPIVCFLL. Residues 344 to 373 are Cytoplasmic-facing; the sequence is NKDLKKCLRTHAPCWGTGGAPAPREPYCVM.

Belongs to the G-protein coupled receptor 1 family. As to expression, expressed in the ovary, specifically in granulosa cells of follicles that have passed the primary stage and in oocytes (at protein level). Expressed in preadipocytes.

It localises to the cell membrane. Functionally, is a receptor for the SMIM20 derived peptides Phoenixin-14 and Phoenixin-20. It mediates the Phoenixin-14 and Phoenixin-20 augmentation of gonadotropin-releasing hormone (GNRH) signaling in the hypothalamus and pituitary gland. In the ovary, it mediates the effects of Phoenixin-14 and Phoenixin-20 induced granulosa cell proliferation during follicular growth. This chain is Probable G-protein coupled receptor 173 (Gpr173), found in Mus musculus (Mouse).